Here is a 239-residue protein sequence, read N- to C-terminus: tRNA1(Val) (adenine(37)-N6)-methyltransferase (239 aa).

It belongs to the methyltransferase superfamily. tRNA (adenine-N(6)-)-methyltransferase family.

Its subcellular location is the cytoplasm. The enzyme catalyses adenosine(37) in tRNA1(Val) + S-adenosyl-L-methionine = N(6)-methyladenosine(37) in tRNA1(Val) + S-adenosyl-L-homocysteine + H(+). Functionally, specifically methylates the adenine in position 37 of tRNA(1)(Val) (anticodon cmo5UAC). The chain is tRNA1(Val) (adenine(37)-N6)-methyltransferase from Vibrio vulnificus (strain CMCP6).